The sequence spans 206 residues: ATP phosphoribosyltransferase (206 aa).

Belongs to the ATP phosphoribosyltransferase family. Short subfamily. Heteromultimer composed of HisG and HisZ subunits.

It localises to the cytoplasm. The catalysed reaction is 1-(5-phospho-beta-D-ribosyl)-ATP + diphosphate = 5-phospho-alpha-D-ribose 1-diphosphate + ATP. The protein operates within amino-acid biosynthesis; L-histidine biosynthesis; L-histidine from 5-phospho-alpha-D-ribose 1-diphosphate: step 1/9. In terms of biological role, catalyzes the condensation of ATP and 5-phosphoribose 1-diphosphate to form N'-(5'-phosphoribosyl)-ATP (PR-ATP). Has a crucial role in the pathway because the rate of histidine biosynthesis seems to be controlled primarily by regulation of HisG enzymatic activity. The protein is ATP phosphoribosyltransferase of Wolinella succinogenes (strain ATCC 29543 / DSM 1740 / CCUG 13145 / JCM 31913 / LMG 7466 / NCTC 11488 / FDC 602W) (Vibrio succinogenes).